Reading from the N-terminus, the 206-residue chain is Methyl-coenzyme M reductase operon protein C (206 aa).

MCR is composed of three subunits: alpha, beta, and gamma. The function of proteins C and D is not known.

This is Methyl-coenzyme M reductase operon protein C (mcrC) from Methanosarcina barkeri (strain Fusaro / DSM 804).